The following is a 205-amino-acid chain: Putative 3-methyladenine DNA glycosylase (205 aa).

This sequence belongs to the DNA glycosylase MPG family.

The polypeptide is Putative 3-methyladenine DNA glycosylase (Bacillus cereus (strain G9842)).